The chain runs to 284 residues: 2-dehydro-3-deoxyphosphooctonate aldolase (284 aa).

It belongs to the KdsA family.

Its subcellular location is the cytoplasm. It carries out the reaction D-arabinose 5-phosphate + phosphoenolpyruvate + H2O = 3-deoxy-alpha-D-manno-2-octulosonate-8-phosphate + phosphate. It participates in carbohydrate biosynthesis; 3-deoxy-D-manno-octulosonate biosynthesis; 3-deoxy-D-manno-octulosonate from D-ribulose 5-phosphate: step 2/3. The protein operates within bacterial outer membrane biogenesis; lipopolysaccharide biosynthesis. The polypeptide is 2-dehydro-3-deoxyphosphooctonate aldolase (Burkholderia vietnamiensis (strain G4 / LMG 22486) (Burkholderia cepacia (strain R1808))).